We begin with the raw amino-acid sequence, 330 residues long: MKIAIDAMGGDHAPKAVVLGAMKAIKEYSDLHITLVGKEEEIRQYLTSEERITILHTDEKIESTDEPVRAVRRKKQASMVLAAQQVKDGVADACISAGSTGALMAAGLFVVGRMEGIERPALSPTMPTVDGEGFVMLDVGANVDAKPIHLYQYAVMGSVYAEKVRGIKNPRVGLLNVGTEDGKGNELSKQVFAMLKDAPINFVGNVESRDLLQGVADVVVCDGFTGNVALKSLEGTALALFSMLKEQLMSSFTSKLAAAVLKPKLMVLKDKMDYSEYGGAALFGLKAPVIKAHGSSNDQSIFSAIRQTREMVAKEVIPTISSVMEKEPLQ.

This sequence belongs to the PlsX family. As to quaternary structure, homodimer. Probably interacts with PlsY.

It localises to the cytoplasm. The catalysed reaction is a fatty acyl-[ACP] + phosphate = an acyl phosphate + holo-[ACP]. The protein operates within lipid metabolism; phospholipid metabolism. In terms of biological role, catalyzes the reversible formation of acyl-phosphate (acyl-PO(4)) from acyl-[acyl-carrier-protein] (acyl-ACP). This enzyme utilizes acyl-ACP as fatty acyl donor, but not acyl-CoA. This Bacillus thuringiensis (strain Al Hakam) protein is Phosphate acyltransferase.